A 900-amino-acid polypeptide reads, in one-letter code: Phosphoenolpyruvate carboxylase (900 aa).

Residues His-140 and Lys-568 contribute to the active site.

This sequence belongs to the PEPCase type 1 family. The cofactor is Mg(2+).

It carries out the reaction oxaloacetate + phosphate = phosphoenolpyruvate + hydrogencarbonate. In terms of biological role, forms oxaloacetate, a four-carbon dicarboxylic acid source for the tricarboxylic acid cycle. In Neisseria meningitidis serogroup C / serotype 2a (strain ATCC 700532 / DSM 15464 / FAM18), this protein is Phosphoenolpyruvate carboxylase.